The sequence spans 276 residues: MNPEHSPLGKATVYAAQYDASLLFPIPRAGAREQLGITSALPFFGTDIWNAYELSWLNARGKPQVAIATFYVPAESPNIVESKSFKLYLGSFAQSKFDSVDAVRDVLKRDVSAACGASVSVQLVSPHDFAKLEMDELDGLSLDRLDLDTDVYEPDPSLLSAADGENEAPVEETLVSDLLRSNCPVTGQPDWGSVQIHYVGPQIDHAGLLRYIISFRNHTGFHEQCVERIFLDILHACKPVKLAVYARYTRRGGLDINPFRTNYNQPMPDNARTARQ.

80 to 82 (VES) serves as a coordination point for substrate. NADPH is bound at residue 82 to 83 (SK). The active-site Thioimide intermediate is the cysteine 183. Aspartate 190 (proton donor) is an active-site residue. Substrate is bound at residue 222-223 (HE). Residue 251–252 (RG) participates in NADPH binding.

Belongs to the GTP cyclohydrolase I family. QueF type 2 subfamily. In terms of assembly, homodimer.

The protein localises to the cytoplasm. It carries out the reaction 7-aminomethyl-7-carbaguanine + 2 NADP(+) = 7-cyano-7-deazaguanine + 2 NADPH + 3 H(+). It participates in tRNA modification; tRNA-queuosine biosynthesis. In terms of biological role, catalyzes the NADPH-dependent reduction of 7-cyano-7-deazaguanine (preQ0) to 7-aminomethyl-7-deazaguanine (preQ1). The polypeptide is NADPH-dependent 7-cyano-7-deazaguanine reductase (Burkholderia cenocepacia (strain HI2424)).